A 939-amino-acid polypeptide reads, in one-letter code: Protein translocase subunit SecA 1 (939 aa).

Residues glutamine 85, 103–107, and aspartate 504 each bind ATP; that span reads GEGKT. Residues 848 to 939 are disordered; it reads EVPVEDEKPS…QSKGGRRRKK (92 aa). 3 stretches are compositionally biased toward basic and acidic residues: residues 852 to 863, 872 to 889, and 914 to 925; these read EDEKPSLEKEDA, PEIRAKGLEAPQRPDRLH, and PVRSEADGLTRA. A compositionally biased stretch (basic residues) spans 926–939; sequence ERRKQSKGGRRRKK.

It belongs to the SecA family. Monomer and homodimer. Part of the essential Sec protein translocation apparatus which comprises SecA, SecYEG and auxiliary proteins SecDF. Other proteins may also be involved.

It localises to the cell membrane. The protein resides in the cytoplasm. It carries out the reaction ATP + H2O + cellular proteinSide 1 = ADP + phosphate + cellular proteinSide 2.. Part of the Sec protein translocase complex. Interacts with the SecYEG preprotein conducting channel. Has a central role in coupling the hydrolysis of ATP to the transfer of proteins into and across the cell membrane, serving as an ATP-driven molecular motor driving the stepwise translocation of polypeptide chains across the membrane. This Streptomyces avermitilis (strain ATCC 31267 / DSM 46492 / JCM 5070 / NBRC 14893 / NCIMB 12804 / NRRL 8165 / MA-4680) protein is Protein translocase subunit SecA 1.